The sequence spans 497 residues: MAKEKKRGFFSWLGFGQKEQTPEKETEVQNEQPVVEEIVQAQEPVKASEQAVEEQPQAHTEAEAETFAADVVEVTEQVAESEKAQPEAEVVAQPEPVVEETPEPVAIEREELPLPEDVNAEAVSPEEWQAEAETVEIVEAAEEEAAKEEITDEELETALAAEAAEEAVMVVPPAEEEQPVEEIAQEQEKPTKEGFFARLKRSLLKTKENLGSGFISLFRGKKIDDDLFEELEEQLLIADVGVETTRKIITNLTEGASRKQLRDAEALYGLLKEEMGEILAKVDEPLNVEGKAPFVILMVGVNGVGKTTTIGKLARQFEQQGKSVMLAAGDTFRAAAVEQLQVWGQRNNIPVIAQHTGADSASVIFDAIQAAKARNIDVLIADTAGRLQNKSHLMEELKKIVRVMKKLDVEAPHEVMLTIDASTGQNAVSQAKLFHEAVGLTGITLTKLDGTAKGGVIFSVADQFGIPIRYIGVGERIEDLRPFKADDFIEALFARED.

Disordered regions lie at residues 1–63 and 79–130; these read MAKE…TEAE and AESE…EWQA. Residues 87–96 show a composition bias toward low complexity; sequence EAEVVAQPEP. GTP contacts are provided by residues 300-307, 382-386, and 446-449; these read GVNGVGKT, DTAGR, and TKLD.

It belongs to the GTP-binding SRP family. FtsY subfamily. Part of the signal recognition particle protein translocation system, which is composed of SRP and FtsY. SRP is a ribonucleoprotein composed of Ffh and a 4.5S RNA molecule. Binds to SecY. Post-translationally, proteolytically cleaved. The cleavage may regulate function and subcellular location of FtsY. Full-length FtsY is found primarily associated with the membrane, while cleaved protein is predominantly present in the cytoplasm.

It is found in the cell inner membrane. Its subcellular location is the cytoplasm. It carries out the reaction GTP + H2O = GDP + phosphate + H(+). With respect to regulation, conformation of the Ffh-FtsY complex and regulation of its GTPase activity are modulated by the 4.5S RNA. Formation of the FfH-FtsY complex leads to a mutual stimulation of both GTPases. Functionally, involved in targeting and insertion of nascent membrane proteins into the cytoplasmic membrane. Acts as a receptor for the complex formed by the signal recognition particle (SRP) and the ribosome-nascent chain (RNC). Interaction with SRP-RNC leads to the transfer of the RNC complex to the Sec translocase for insertion into the membrane, the hydrolysis of GTP by both Ffh and FtsY, and the dissociation of the SRP-FtsY complex into the individual components. This chain is Signal recognition particle receptor FtsY, found in Escherichia coli (strain K12).